The following is a 40-amino-acid chain: uncharacterized protein (40 aa).

This is an uncharacterized protein from Leptolyngbya boryana (Plectonema boryanum).